The sequence spans 8384 residues: Mucin-19 (8384 aa).

An N-terminal signal peptide occupies residues 1–21; the sequence is MKLILWYLVVALWCFFKDVEA. Disordered stretches follow at residues 33-197, 222-247, 279-305, and 332-467; these read AASR…YGAG, SKADGRETRGSGSAGGETIVFGPDAG, GDTGISSKTVEGNQTSSSGGSVSIDLG, and QEGF…PEAT. Composition is skewed to low complexity over residues 35–48 and 88–98; these read SRSGGFSYGSSSSG and GGFFNSSSSSG. Over residues 169–184 the composition is skewed to basic and acidic residues; sequence DKSRERWDAGNSRSED. Residues 187–197 are compositionally biased toward polar residues; that stretch reads ADSTNTRYGAG. Positions 279 to 299 are enriched in polar residues; sequence GDTGISSKTVEGNQTSSSGGS. Over residues 359–369 the composition is skewed to low complexity; that stretch reads GSDSSSSGDSS. Positions 370–381 are enriched in polar residues; that stretch reads ARNGFENSSGIS. Composition is skewed to low complexity over residues 424–435 and 443–452; these read SDSGGNTWSSDS and TSSSEYSTSG. 3 consecutive VWFD domains span residues 478–649, 815–995, and 1274–1447; these read GEIS…QHCN, GRCK…SSCI, and TICH…QECS. Intrachain disulfides connect Cys502–Cys648, Cys817–Cys952, Cys838–Cys994, Cys857–Cys865, Cys1276–Cys1411, Cys1298–Cys1446, Cys1307–Cys1408, and Cys1323–Cys1330. Disordered stretches follow at residues 1680-1699, 1732-2464, 2484-2526, 2540-2827, 2850-2917, 2984-3027, 3075-3368, 3386-3428, 3585-3628, 3667-3736, 4105-4147, 4187-4251, 4315-4390, 4414-4455, 4510-4583, 4790-4843, 4895-4930, 5130-5161, 5429-5452, 5464-5494, 5880-5918, 6069-6403, 6440-6918, 6953-7223, 7250-7749, 7783-7975, and 8020-8133; these read TSSSETTGTTLGPLTEPFTT, AGTT…KSPG, LESE…TEGS, RPLD…MTGT, STVG…LGTI, VTTG…SGTT, GTTG…GKTG, TTRL…GKTG, ETTG…TNGL, GSSA…TGLP, TGSS…NGLS, SAGV…AEVT, GLSA…SARV, TGSS…TNGQ, TGTT…TGLP, SSAGVTGTNGLSAEATETTGPSAGVTGTTGLSAGVT, TGTTGPSAEETGATGPSAEVTGTTGPSGGVTG, VTGTTELSAEVTEKTGPSAEVTGK, GPSAEVTGTTGSSAGVTGTTGPSAGVTGTTG, GTSIPLTGKTGTTRTSVEESTTTGPSAGITGTNGLSAEM, TGKT…STES, GRAT…ETTK, GTSE…TGFK, SFST…SKTG, KNGS…EAGS, and SGRS…VSQP. Composition is skewed to low complexity over residues 1732-1746, 1772-1813, and 1820-1833; these read AGTTGGVDAATTGAA, PGEA…TTGP, and GATSSEATSSEGMS. Over residues 1835 to 1860 the composition is skewed to polar residues; sequence VTGQSLGSTAGSDSEITAKTSFTGSS. Positions 1868–1879 are enriched in low complexity; sequence PSPGSPGHFSGG. Positions 1880-1905 are enriched in polar residues; that stretch reads TTEWGNVATTGAAGENTSGALGSTEG. Over residues 1909-1921 the composition is skewed to low complexity; it reads ATTSAGSGNTAGT. Residues 1950–1968 show a composition bias toward polar residues; that stretch reads GSSTPGEADIGNTSFGKSG. Composition is skewed to low complexity over residues 1969 to 1983 and 2013 to 2049; these read TPTVSAASTTSSPVS and GGKITSGWSSSGTSTGASNTPGATGSSTGQTDTSGPS. The segment covering 2055–2100 has biased composition (polar residues); the sequence is NYGQSSEIPGTIKSSSDVSGTMGQSDTTSGPSVAVTRTSEQSSGVT. Composition is skewed to low complexity over residues 2132–2147 and 2159–2170; these read TTGSSAEGSGTTGPSS and GSGTSGQSVTGS. Composition is skewed to polar residues over residues 2171 to 2186 and 2209 to 2225; these read RATGLSATELGTTVSF and GSGTTGPSVVRSGTTRL. Composition is skewed to low complexity over residues 2233–2246 and 2280–2313; these read TESSPGVTGTTTPS and SGPSVVGSGTTGPTSAGLGTTAPSTRRSSTTKPS. Residues 2238–6086 are approximate repeats of G-V-T-G-T-T-G-P-S-A; the sequence is GVTGTTTPSA…GVTGTTGLSA (3849 aa). Polar residues-rich tracts occupy residues 2316-2332 and 2354-2372; these read RTGTTGQSGAESGTTEP and ATESSTSRPLGETTGTTIP. Residues 2403–2419 show a composition bias toward gly residues; the sequence is SSGGSGATRSSGGGMGT. Positions 2420–2441 are enriched in low complexity; that stretch reads TGQSTARSETTGPLFGLTGTFG. Residues 2442–2460 show a composition bias toward polar residues; it reads QSATVTGTSSNSAGVTTPE. Composition is skewed to low complexity over residues 2512–2526, 2545–2571, and 2578–2589; these read SAGETGTTEPSTEGS, GSGTTGTLSGGSSTTRSSDGTTGTTRK, and TTGLSGLTGTSG. Composition is skewed to polar residues over residues 2595–2610 and 2638–2653; these read TGTSSKSAGVTVTSEK and TRPSGGVTVTSGQSAR. Residues 2654 to 2681 are compositionally biased toward low complexity; the sequence is VTETVGASAGVTGTTGPSTEGSGATGPS. Composition is skewed to polar residues over residues 2695 to 2748 and 2755 to 2770; these read SGTT…TGTT and TETTRPSVVKSGTTGP. Residues 2787-2799 show a composition bias toward low complexity; the sequence is ATRSSGGETETTG. Polar residues-rich tracts occupy residues 2800–2827, 2850–2859, and 2874–2892; these read QSAVKSGTTESFTRLTRTSGQSAGMTGT, STVGLETTRP, and AQTTGPSAGVTVTSGQSAR. Over residues 2894 to 2910 the composition is skewed to low complexity; that stretch reads TGASGPSVGVTGTTGPA. Residues 2984–2998 are compositionally biased toward polar residues; the sequence is VTTGPSVTGVETTAK. The segment covering 2999-3027 has biased composition (low complexity); sequence TTSGGLSTTISSVGGTGTTGQSPERSGTT. Positions 3099–3109 are enriched in polar residues; sequence PSITGSGTTRP. Low complexity predominate over residues 3114 to 3130; it reads SWTAGTSSGGHSTTSPS. Residues 3131-3159 show a composition bias toward polar residues; sequence VRGTETTGQSAAESVTTGPVTGYTETSGP. The segment covering 3172–3188 has biased composition (low complexity); sequence TVTQTTGSSAAVSGTTV. Over residues 3189–3224 the composition is skewed to polar residues; the sequence is QSLTVSGTTRPSSGQTEITGSSVKESGTTESSAVRS. Low complexity predominate over residues 3225–3277; it reads GTTGPTAGVTGTNGPSSAGVTGITGSSPGVTGTTGSSPGVTGTTGSSARSGTS. Polar residues-rich tracts occupy residues 3303–3317 and 3324–3362; these read ITGTNGLSAEVTGTT and TGTTGPSAGVTRTTGLSAGETGTTGLSPGVTRTTRSSAG. Residues 3390-3417 show a composition bias toward low complexity; the sequence is SAGVTGTTGPSPGVTGTTGTPAGVTGTT. Polar residues-rich tracts occupy residues 3702–3728 and 4105–4116; these read VTGTTGLSPGVTGTSGLSAEVTGTTGP and TGSSARSGTSIP. Positions 4117 to 4126 are enriched in low complexity; sequence SVGETGTTRT. The segment covering 4320-4346 has biased composition (polar residues); sequence VTGTTRPSAGVTGTTGQSAEVTGTTEP. Composition is skewed to low complexity over residues 4347–4385 and 4414–4426; these read SAGLTETTGSSTGVTGATGPLAGVTGTTGISTEVTGTTG and TGSSARSGTSTPS. Composition is skewed to low complexity over residues 5469–5494 and 5889–5903; these read VTGTTGSSAGVTGTTGPSAGVTGTTG and TGTTRTSVEESTTTG. Composition is skewed to polar residues over residues 5908–5918, 6071–6103, and 6111–6121; these read ITGTNGLSAEM, KTRSSAGVTGTTGLSAKSGTSIPSAGKTGTTKT, and TRPSAGITATT. The segment covering 6156–6168 has biased composition (low complexity); sequence TTTGTTGVTTGTT. Polar residues-rich tracts occupy residues 6217 to 6248 and 6257 to 6275; these read EVSTISEVSNTGITGVGSETSIETGISNTATT and APGSSSTEATTSIGGSAST. Residues 6284 to 6295 are compositionally biased toward low complexity; sequence TGSTRGVRTTGS. Composition is skewed to polar residues over residues 6303 to 6323 and 6336 to 6346; these read GEFSGTTISSGGFHTEATTLT and ESTTSLPQSAK. Residues 6378-6389 are compositionally biased toward low complexity; that stretch reads SGTTISSGGSHT. 2 stretches are compositionally biased toward polar residues: residues 6440–6457 and 6470–6503; these read GRATGATTSIAGSDTSQA and TTITSGDSHTEATALTGSRGSIGTESTVETTTYI. Low complexity predominate over residues 6507 to 6523; the sequence is GTTRGGLATATTGAFSG. Positions 6560-6571 are enriched in polar residues; the sequence is TTFTSGGSHTEA. A compositionally biased stretch (low complexity) spans 6581 to 6597; sequence TGTESRAATTRAAPGTT. Residues 6599 to 6608 show a composition bias toward polar residues; the sequence is VPGSSNTGAT. Positions 6612–6628 are enriched in low complexity; that stretch reads GGSATTRGRITTATTGA. Polar residues-rich tracts occupy residues 6669-6680 and 6689-6698; these read RITSGGSYTATT and APGSSNTGAT. The segment covering 6707–6718 has biased composition (low complexity); the sequence is TRGRITTATTGA. Residues 6752-6766 show a composition bias toward polar residues; sequence TTLTGDRSSTGSESR. The span at 6767-6781 shows a compositional bias: low complexity; the sequence is TATTGVAPGTTVAPG. Positions 6794 to 6817 are enriched in polar residues; that stretch reads SGTTNIGRATGATTSIVGSDTSQA. Positions 6827-6842 are enriched in low complexity; sequence SPGASSTSQSSRPGTS. Residues 6843–6875 are compositionally biased toward polar residues; the sequence is VTPDSSASESETVTTKEFSGTTAISRTSHTGTP. Residues 6887 to 6901 show a composition bias toward low complexity; it reads TATTGVAPGTTVAPG. Polar residues-rich tracts occupy residues 6902 to 6911 and 6953 to 6964; these read SSNTEATTSV and GTSEVAPSTTVA. Positions 6966 to 6994 are enriched in low complexity; sequence GSFSTAATTSPGASGTTGVTTTTKTTTSL. The segment covering 7006–7041 has biased composition (polar residues); sequence SATTGAPGSRTGTAGVPSATTVSPGSSNSEATTSVG. The span at 7045 to 7074 shows a compositional bias: low complexity; the sequence is KTGAETITEATTSTEGTGTSGTGFKTGTSE. The segment covering 7085–7094 has biased composition (polar residues); that stretch reads SFSTAATTSP. Low complexity predominate over residues 7095–7112; the sequence is GASGMTGVTTTTKTTTSL. Polar residues predominate over residues 7143-7158; that stretch reads TRVTPGSSNSEATTSV. Composition is skewed to low complexity over residues 7201 to 7215 and 7250 to 7276; these read SGSSNTEATTSTEGT and SFSTATTSSGASGITRAGPTSETTTSL. Residues 7293 to 7311 are compositionally biased toward polar residues; it reads SGTTVAPGSSNSEATTSVG. Low complexity predominate over residues 7379-7397; the sequence is TTSTKGTGTSGTGFKTGTS. Over residues 7403–7421 the composition is skewed to polar residues; the sequence is TTVSPGSFSTATISPGASR. A compositionally biased stretch (low complexity) spans 7422-7435; the sequence is TTGAAPAAETTTSL. Over residues 7465-7483 the composition is skewed to polar residues; sequence SATTIAPGSSNSEATTSLG. Positions 7525–7537 are enriched in gly residues; it reads PLGGASGTSGGYV. 2 stretches are compositionally biased toward polar residues: residues 7544-7557 and 7571-7596; these read PTTSIEETGTSRTI and AGTSVVAPSTTVAPGSFSTAATTSPG. Over residues 7600-7613 the composition is skewed to low complexity; it reads MTGVRTTSKTTTSL. 2 stretches are compositionally biased toward polar residues: residues 7642–7669 and 7698–7708; these read SSRTTILSGSSNTEATNSIEETGTSGTG and SFSTAATTSPG. Positions 7715-7732 are enriched in low complexity; sequence TGPTAETTTFLGGSSTTG. Polar residues predominate over residues 7783–7811; that stretch reads KNGSMTTALGSQLSSSQTVIPGSSGTISH. The span at 7812 to 7828 shows a compositional bias: low complexity; that stretch reads TTVAPGSSVTGTTTGAS. Residues 7830 to 7851 are compositionally biased toward polar residues; it reads DQVTGSKTGTTGVALSTTVAPG. Low complexity predominate over residues 7852–7861; the sequence is SSSTEATTST. A compositionally biased stretch (polar residues) spans 7862-7891; that stretch reads GVHRTTVVGQKTGATTRGSAKQGTRSTIEA. The span at 7892–7917 shows a compositional bias: low complexity; sequence TTSFRGTGTTGSGMNTGTTGVVSGNT. Residues 7918 to 7934 show a composition bias toward polar residues; that stretch reads ISPSSFNTEATSGTSER. Low complexity predominate over residues 7938-7952; that stretch reads GSEIGTTGIVSGTTV. Composition is skewed to polar residues over residues 7953–7965, 8020–8040, 8048–8081, and 8110–8120; these read APGSSNTEATTSL, SGRSQPTGSKTGYTVTGSGTT, TGNTPGSTGVTSSQEGTTVVSSGITGIPETSISG, and ETGVQTGSTLV. The VWFC domain occupies 8159-8225; the sequence is PVCHGPLGEE…DTCCEIGYCE (67 aa). Intrachain disulfides connect Cys8288-Cys8339, Cys8306-Cys8353, Cys8315-Cys8369, and Cys8319-Cys8371. Positions 8288 to 8376 constitute a CTCK domain; sequence CKNNCRSSLV…TTCSCLDICQ (89 aa).

Expressed corneal epithelial cells, conjunctival goblet and epithelial cells and lacrimal gland cells (at protein level). Expressed by mucous cells of the submandibular gland and submucosal gland of the trachea. Expressed by middle ear epithelial cells.

It is found in the secreted. In terms of biological role, may function in ocular mucus homeostasis. The protein is Mucin-19 (MUC19) of Homo sapiens (Human).